The chain runs to 334 residues: N-acetylmuramate/N-acetylglucosamine kinase (334 aa).

It belongs to the kinase AmgK family.

The enzyme catalyses N-acetyl-D-muramate + ATP = N-acetyl-alpha-D-muramate 1-phosphate + ADP + H(+). It catalyses the reaction N-acetyl-D-glucosamine + ATP = N-acetyl-alpha-D-glucosamine 1-phosphate + ADP + H(+). It participates in cell wall biogenesis; peptidoglycan recycling. Functionally, sugar kinase that catalyzes the ATP-dependent phosphorylation of N-acetylmuramate (MurNAc) and N-acetylglucosamine (GlcNAc) at its C1 hydroxyl group, leading to MurNAc alpha-1P and GlcNAc alpha-1P, respectively. Is likely involved in peptidoglycan recycling as part of a cell wall recycling pathway that bypasses de novo biosynthesis of the peptidoglycan precursor UDP-MurNAc. Is able to complement the fosfomycin sensitivity phenotype of a P.putida mutant lacking amgK. The chain is N-acetylmuramate/N-acetylglucosamine kinase from Neisseria meningitidis serogroup B (strain ATCC BAA-335 / MC58).